The primary structure comprises 554 residues: Chaperonin GroEL (554 aa).

ATP contacts are provided by residues 30 to 33, Lys-51, 87 to 91, Gly-415, 479 to 481, and Asp-495; these read TLGP, DGTTT, and NAA.

The protein belongs to the chaperonin (HSP60) family. As to quaternary structure, forms a cylinder of 14 subunits composed of two heptameric rings stacked back-to-back. Interacts with the co-chaperonin GroES.

The protein localises to the cytoplasm. It catalyses the reaction ATP + H2O + a folded polypeptide = ADP + phosphate + an unfolded polypeptide.. Functionally, together with its co-chaperonin GroES, plays an essential role in assisting protein folding. The GroEL-GroES system forms a nano-cage that allows encapsulation of the non-native substrate proteins and provides a physical environment optimized to promote and accelerate protein folding. In Nitrosococcus oceani (strain ATCC 19707 / BCRC 17464 / JCM 30415 / NCIMB 11848 / C-107), this protein is Chaperonin GroEL.